The following is a 439-amino-acid chain: Chromosomal replication initiator protein DnaA (439 aa).

Residues 1–72 (MEQFSAFKLL…SKLYDDIRAV (72 aa)) form a domain I, interacts with DnaA modulators region. Residues 72–99 (VRFVNEQDFFINLAKLEEDNRETLYQSS) form a domain II region. Residues 100-322 (GLSKNFTFKN…GIATKLLFYV (223 aa)) form a domain III, AAA+ region region. Positions 144, 146, 147, and 148 each coordinate ATP. The interval 323-439 (KTTKQNLINN…LQDIITSLVI (117 aa)) is domain IV, binds dsDNA.

The protein belongs to the DnaA family. As to quaternary structure, oligomerizes as a right-handed, spiral filament on DNA at oriC.

Its subcellular location is the cytoplasm. Plays an essential role in the initiation and regulation of chromosomal replication. ATP-DnaA binds to the origin of replication (oriC) to initiate formation of the DNA replication initiation complex once per cell cycle. Binds the DnaA box (a 9 base pair repeat at the origin) and separates the double-stranded (ds)DNA. Forms a right-handed helical filament on oriC DNA; dsDNA binds to the exterior of the filament while single-stranded (ss)DNA is stabiized in the filament's interior. The ATP-DnaA-oriC complex binds and stabilizes one strand of the AT-rich DNA unwinding element (DUE), permitting loading of DNA polymerase. After initiation quickly degrades to an ADP-DnaA complex that is not apt for DNA replication. Binds acidic phospholipids. This is Chromosomal replication initiator protein DnaA from Mycoplasma pneumoniae (strain ATCC 29342 / M129 / Subtype 1) (Mycoplasmoides pneumoniae).